Reading from the N-terminus, the 142-residue chain is Putative pre-16S rRNA nuclease (142 aa).

This sequence belongs to the YqgF nuclease family.

The protein localises to the cytoplasm. Could be a nuclease involved in processing of the 5'-end of pre-16S rRNA. The polypeptide is Putative pre-16S rRNA nuclease (Photobacterium profundum (strain SS9)).